A 183-amino-acid polypeptide reads, in one-letter code: Large ribosomal subunit protein uL5 (183 aa).

Belongs to the universal ribosomal protein uL5 family. Part of the 50S ribosomal subunit; part of the 5S rRNA/L5/L18/L25 subcomplex. Contacts the 5S rRNA and the P site tRNA. Forms a bridge to the 30S subunit in the 70S ribosome.

In terms of biological role, this is one of the proteins that bind and probably mediate the attachment of the 5S RNA into the large ribosomal subunit, where it forms part of the central protuberance. In the 70S ribosome it contacts protein S13 of the 30S subunit (bridge B1b), connecting the 2 subunits; this bridge is implicated in subunit movement. Contacts the P site tRNA; the 5S rRNA and some of its associated proteins might help stabilize positioning of ribosome-bound tRNAs. The polypeptide is Large ribosomal subunit protein uL5 (Pseudothermotoga lettingae (strain ATCC BAA-301 / DSM 14385 / NBRC 107922 / TMO) (Thermotoga lettingae)).